A 204-amino-acid chain; its full sequence is VEL1-related protein AC977.05c (204 aa).

The N-terminal stretch at 1–17 is a signal peptide; that stretch reads MIFKNLISLFFIGLATA.

Belongs to the VEL1 family.

It localises to the cytoplasm. It is found in the cytosol. The polypeptide is VEL1-related protein AC977.05c (Schizosaccharomyces pombe (strain 972 / ATCC 24843) (Fission yeast)).